The following is a 414-amino-acid chain: MTTTTTTTALTFTLPDGTSTVTIRPTQKAAPSEEPSQDTAPSKKDSNHEVYLNDHLIATWVIDPSVKTRVSPAQVLDERAEFDSVRHLVLSSRRSNDNGHTWISIYALWLLHHDLDVIPISSPSNSAVTTYLINTGLAAPSPFEPADTDAGRTLLLAREAFWQGAGTPDNLSWLRSRPEASIPGFNSHLGAFASQMSFTRRGNVCTTHPLRPQKPAPGTVVYSRYIVEVGQHLQLVHIDASNPVHFSAYARWQNSDRVNHGWRERGPDEKHAAYLESQRIDPHTMSLIFLWDGEPAGYSEVGWAKEDNTACFVSSNCGIHIGEFDQLSHILVGEEKFRGGKRYQAVATSIKHLCFLRDPRTTQVIAEPRFDLPSVPIQARFLPQERKKRVQLPHKQAVLFALQRERFFQEGHFY.

Residues 16-25 show a composition bias toward polar residues; that stretch reads DGTSTVTIRP. A disordered region spans residues 16-47; the sequence is DGTSTVTIRPTQKAAPSEEPSQDTAPSKKDSN. Histidine 329 is a binding site for substrate. The Proton acceptor role is filled by glutamate 367.

Belongs to the lysine N-acyltransferase mbtK family.

Its pathway is siderophore biosynthesis. Its function is as follows. Acyltransferase; part of the gene cluster 14 that mediates the biosynthesis of a ferrichrome A-like siderophore which may contribute to organismal virulence. The first step of siderophore biosynthesis is performed by the HMG-CoA synthase (HMGS) MYCGRDRAFT_54740 which catalyzes the generation of HMG-CoA and CoA using acetoacetyl-CoA and acetyl-CoA as substrates. The enoyl-CoA isomerase/hydratase MYCGRDRAFT_76805 then catalyzes the conversion of HMG-CoA to methylglutaconyl-CoA. The acyltransferase MYCGRDRAFT_85486 then fuses methylglutaconyl-CoA with hydroxyornithine to yield methylglutaconyl hydroxyornithine. Methylglutaconyl hydroxyornithine is then available for use by the nonribosomal peptide synthetase NRPS2 to generate the ferrichrome A-like siderophore. This Zymoseptoria tritici (strain CBS 115943 / IPO323) (Speckled leaf blotch fungus) protein is Acyltransferase MYCGRDRAFT_85486.